A 485-amino-acid polypeptide reads, in one-letter code: Metalloprotease AprA (485 aa).

H187 is a Zn(2+) binding site. E188 is an active-site residue. 2 residues coordinate Zn(2+): H191 and H197. Residues R268, G270, T272, D300, G302, G303, D305, T342, E344, G349, G351, D353, N358, L360, N362, G366, G367, A368, G369, D371, G375, G376, G377, G378, D380, G384, G385, T386, G387, D389, D398, D405, D415, D461, T463, N465, S467, and D469 each contribute to the Ca(2+) site. 3 Hemolysin-type calcium-binding repeats span residues 347–364 (FGGSGNDLLIGNALANVL), 365–382 (KGGAGNDIIYGGGGADQL), and 383–395 (WGGTGADTFVFGA).

The protein belongs to the peptidase M10B family. Ca(2+) is required as a cofactor. The cofactor is Zn(2+).

Its subcellular location is the secreted. Functionally, secreted protease which is important for P.entomophila to counteract the local immune response of Drosophila. Can degrade antimicrobial peptides (AMPs), e.g. Diptericin and Cecropin A. Thus, protects P.entomophila from the Drosophila antimicrobial peptides produced by the gut innate immune response, and promotes bacterial persistence in the Drosophila gut and killing of the host. Is responsible for maturation of pro-Monalysin to the active toxin Monalysin, by cleaving its N-terminus. This Pseudomonas entomophila (strain L48) protein is Metalloprotease AprA.